A 404-amino-acid chain; its full sequence is Nicotinate phosphoribosyltransferase (404 aa).

H225 is modified (phosphohistidine; by autocatalysis).

It belongs to the NAPRTase family. In terms of processing, transiently phosphorylated on a His residue during the reaction cycle. Phosphorylation strongly increases the affinity for substrates and increases the rate of nicotinate D-ribonucleotide production. Dephosphorylation regenerates the low-affinity form of the enzyme, leading to product release.

The enzyme catalyses nicotinate + 5-phospho-alpha-D-ribose 1-diphosphate + ATP + H2O = nicotinate beta-D-ribonucleotide + ADP + phosphate + diphosphate. Its pathway is cofactor biosynthesis; NAD(+) biosynthesis; nicotinate D-ribonucleotide from nicotinate: step 1/1. Its function is as follows. Catalyzes the synthesis of beta-nicotinate D-ribonucleotide from nicotinate and 5-phospho-D-ribose 1-phosphate at the expense of ATP. The sequence is that of Nicotinate phosphoribosyltransferase from Methanosarcina acetivorans (strain ATCC 35395 / DSM 2834 / JCM 12185 / C2A).